The following is a 671-amino-acid chain: Probable potassium transport system protein Kup 2 (671 aa).

Helical transmembrane passes span 12–32 (FAGL…SPLY), 56–76 (ISLI…MIAL), 99–119 (WLVI…TLTP), 139–159 (IPVP…VILF), 172–192 (AFGP…IANL), 218–238 (VGIL…ALYS), 251–271 (SWPY…AWIL), 296–316 (LFAI…LITG), 345–365 (IYIP…VFLF), 374–394 (AYGL…FEYL), 400–420 (PLYL…MFLI), and 429–449 (GGYV…VWFY).

The protein belongs to the HAK/KUP transporter (TC 2.A.72) family.

The protein localises to the cell membrane. The catalysed reaction is K(+)(in) + H(+)(in) = K(+)(out) + H(+)(out). Its function is as follows. Transport of potassium into the cell. Likely operates as a K(+):H(+) symporter. This Lactobacillus acidophilus (strain ATCC 700396 / NCK56 / N2 / NCFM) protein is Probable potassium transport system protein Kup 2.